The primary structure comprises 215 residues: 3-dehydroquinate dehydratase (215 aa).

Residues Ser6, 31–33 (ELR), and Arg64 contribute to the 3-dehydroquinate site. The Proton donor/acceptor role is filled by His111. Residue Lys138 is the Schiff-base intermediate with substrate of the active site. The 3-dehydroquinate site is built by Arg174, Thr193, and Gln197.

The protein belongs to the type-I 3-dehydroquinase family. As to quaternary structure, homodimer.

The catalysed reaction is 3-dehydroquinate = 3-dehydroshikimate + H2O. The protein operates within metabolic intermediate biosynthesis; chorismate biosynthesis; chorismate from D-erythrose 4-phosphate and phosphoenolpyruvate: step 3/7. Involved in the third step of the chorismate pathway, which leads to the biosynthesis of aromatic amino acids. Catalyzes the cis-dehydration of 3-dehydroquinate (DHQ) and introduces the first double bond of the aromatic ring to yield 3-dehydroshikimate. The protein is 3-dehydroquinate dehydratase of Ignicoccus hospitalis (strain KIN4/I / DSM 18386 / JCM 14125).